The sequence spans 330 residues: Autoinducer 2 import system permease protein LsrD (330 aa).

Residues 1–4 lie on the Cytoplasmic side of the membrane; that stretch reads MRIR. The chain crosses the membrane as a helical span at residues 5-25; it reads YGWELALAALLVIEIVSFGAI. Over 26–42 the chain is Periplasmic; it reads NPRMLDLNMLLFSTSDF. Residues 43 to 63 traverse the membrane as a helical segment; sequence ICIGIVALPLTMVIVSGGIDI. The Cytoplasmic segment spans residues 64–67; that stretch reads SFGS. 2 helical membrane-spanning segments follow: residues 68–88 and 89–109; these read TIGLCAIALGVLFQSGVPMPL and AILLTLLLGALCGLINAGLII. Residues 110-115 are Cytoplasmic-facing; sequence YTKVNP. A helical transmembrane segment spans residues 116–136; sequence LVITLGTLYLFAGSALLLSGM. The Periplasmic segment spans residues 137–159; the sequence is AGATGYEGIGGFPMAFTDFANLD. The chain crosses the membrane as a helical span at residues 160–180; the sequence is VLGLPVPLIIFLICLLVFWLW. The Cytoplasmic segment spans residues 181–209; the sequence is LHKTHAGRNVFLIGQSPRVALYSAIPVNR. The chain crosses the membrane as a helical span at residues 210–230; sequence TLCALYAMTGLASAVAAVLLV. Residues 231–237 are Periplasmic-facing; sequence SYFGSAR. 2 helical membrane passes run 238-258 and 259-279; these read SDLGASFLMPAITAVVLGGAN and IYGGSGAIIGTAIAVLLVGYL. Over 280–285 the chain is Periplasmic; it reads QQGLQM. Residues 286–306 form a helical membrane-spanning segment; the sequence is AGVPNQVSSALSGALLIVVVV. At 307-330 the chain is on the cytoplasmic side; that stretch reads GRSVSLHRQQIKEWLARRANNPLP.

It belongs to the binding-protein-dependent transport system permease family. AraH/RbsC subfamily. In terms of assembly, the complex is composed of two ATP-binding proteins (LsrA), two transmembrane proteins (LsrC and LsrD) and a solute-binding protein (LsrB).

The protein resides in the cell inner membrane. Functionally, part of the ABC transporter complex LsrABCD involved in autoinducer 2 (AI-2) import. Probably responsible for the translocation of the substrate across the membrane. This is Autoinducer 2 import system permease protein LsrD (lsrD) from Escherichia coli O157:H7.